We begin with the raw amino-acid sequence, 365 residues long: DNA polymerase IV (365 aa).

One can recognise a UmuC domain in the interval isoleucine 7–glycine 188. Mg(2+) contacts are provided by aspartate 11 and aspartate 106. The active site involves glutamate 107.

Belongs to the DNA polymerase type-Y family. In terms of assembly, monomer. Mg(2+) is required as a cofactor.

It localises to the cytoplasm. The enzyme catalyses DNA(n) + a 2'-deoxyribonucleoside 5'-triphosphate = DNA(n+1) + diphosphate. In terms of biological role, poorly processive, error-prone DNA polymerase involved in untargeted mutagenesis. Copies undamaged DNA at stalled replication forks, which arise in vivo from mismatched or misaligned primer ends. These misaligned primers can be extended by PolIV. Exhibits no 3'-5' exonuclease (proofreading) activity. May be involved in translesional synthesis, in conjunction with the beta clamp from PolIII. This is DNA polymerase IV from Clostridioides difficile (strain 630) (Peptoclostridium difficile).